A 485-amino-acid chain; its full sequence is FAD-dependent monooxygenase elcH (485 aa).

The first 19 residues, M1 to A19, serve as a signal peptide directing secretion. FAD is bound by residues D59 and G73. Residues N126, N147, and N157 are each glycosylated (N-linked (GlcNAc...) asparagine).

This sequence belongs to the paxM FAD-dependent monooxygenase family. Requires FAD as cofactor.

The protein operates within secondary metabolite biosynthesis. FAD-dependent monooxygenase; part of the gene cluster that mediates the biosynthesis of elsinochrome C, a perelyenequinone phytotoxin structurally similar to cercosporin. The first step of elsinochrome C biosynthesis is performed by the polyketide synthase elcA which catalyzes the formation of nor-toralactone. The starter unit acyltransferase (SAT) domain of elcA initiates polyketide extension by the selective utilization of acetyl-CoA, which is elongated to the heptaketide in the beta-ketoacyl synthase (KS) domain by successive condensations with six malonyl units introduced by the malonyl acyltransferase (MAT) domain. The product template (PT) domain catalyzes C4-C9 and C2-C11 aldol cyclizations and dehydrations to a trihydroxynaphthalene, which is thought to be delivered to the thioesterase (TE) domain for product release. The bifunctional enzyme elcB then methylates nor-toralactone to toralactone before conducting an unusual oxidative aromatic ring opening. The next step in perylenequinone biosynthesis is an O-methylation at the nascent OH-6 of the elcB product performed by the O-methyltransferase elcD. The oxidative coupling of the two monomeric naphthol units in perylenequinone biosynthesis is catalyzed by the FAD-dependent monooxygenase elcE and the multicopper oxidase elcG. ElcG might catalyze the first intermolecular coupling in a regio- and stereo-selective manner via a phenol radical coupling mechanism and the elcE could forge the second C-C bond intramolecularly via a hydride transfer mechanism. The fasciclin domain-containing protein elcF might also play a role duting this step. The last piece of the puzzle in the biosynthesis of elsinochrome C is the additional annulation by enolate coupling to afford the dihydrobenzo(ghi)perylenequinone system, catalyzed by the FAD-dependent monooxygenase elcH. The chain is FAD-dependent monooxygenase elcH from Phaeosphaeria nodorum (strain SN15 / ATCC MYA-4574 / FGSC 10173) (Glume blotch fungus).